A 376-amino-acid chain; its full sequence is Queuine tRNA-ribosyltransferase accessory subunit 2 (376 aa).

Zn(2+)-binding residues include Cys323, Cys325, Cys328, and His354.

It belongs to the queuine tRNA-ribosyltransferase family. QTRT2 subfamily. As to quaternary structure, heterodimer of a catalytic subunit and an accessory subunit. It depends on Zn(2+) as a cofactor.

It is found in the cytoplasm. Its function is as follows. Non-catalytic subunit of the queuine tRNA-ribosyltransferase (TGT) that catalyzes the base-exchange of a guanine (G) residue with queuine (Q) at position 34 (anticodon wobble position) in tRNAs with GU(N) anticodons (tRNA-Asp, -Asn, -His and -Tyr), resulting in the hypermodified nucleoside queuosine (7-(((4,5-cis-dihydroxy-2-cyclopenten-1-yl)amino)methyl)-7-deazaguanosine). This chain is Queuine tRNA-ribosyltransferase accessory subunit 2, found in Caenorhabditis briggsae.